Reading from the N-terminus, the 599-residue chain is Aspartate--tRNA ligase (599 aa).

Glu-180 contributes to the L-aspartate binding site. The segment at 204-207 (QIFK) is aspartate. Arg-226 serves as a coordination point for L-aspartate. Residues 226-228 (RDE) and Gln-235 contribute to the ATP site. Position 454 (His-454) interacts with L-aspartate. Position 488 (Glu-488) interacts with ATP. Arg-495 contacts L-aspartate. An ATP-binding site is contributed by 540-543 (GLDR).

This sequence belongs to the class-II aminoacyl-tRNA synthetase family. Type 1 subfamily. In terms of assembly, homodimer.

It is found in the cytoplasm. The catalysed reaction is tRNA(Asp) + L-aspartate + ATP = L-aspartyl-tRNA(Asp) + AMP + diphosphate. Its function is as follows. Catalyzes the attachment of L-aspartate to tRNA(Asp) in a two-step reaction: L-aspartate is first activated by ATP to form Asp-AMP and then transferred to the acceptor end of tRNA(Asp). This is Aspartate--tRNA ligase from Clostridium botulinum (strain Alaska E43 / Type E3).